The primary structure comprises 227 residues: E3 ubiquitin-protein ligase ZNRF1 (227 aa).

The segment at 1-38 (MGGKQSTAARSRGPFPGVSTDDSAVPPPGGAPHFGHYR) is disordered. A lipid anchor (N-myristoyl glycine) is attached at glycine 2. A required for endosomal and lysosomal localization and myristoylation region spans residues 2 to 10 (GGKQSTAAR). Serine 50, serine 52, and serine 53 each carry phosphoserine. The tract at residues 77-105 (RGAGDAERAPGSGGSASDSTYAHGNGYQE) is disordered. At tyrosine 103 the chain carries Phosphotyrosine. Serine 123 carries the post-translational modification Phosphoserine. An RING-type; atypical zinc finger spans residues 184–225 (CVICLEELLQGDTIARLPCLCIYHKSCIDSWFEVNRSCPEHP).

Interacts with AKT1, GLUL and TUBB2A. Interacts with ZNRF2. Interacts (via its RING domain) with UBE2N. Interacts (when phosphorylated) with YWHAE. Post-translationally, N-myristoylation targets ZNRF1 to intracellular membranes. Phosphorylated by SRC at Tyr-103; leading to 'Lys-63'-linked ubiquitination of TLR3, lysosomal trafficking and degradation.

The protein resides in the endosome. Its subcellular location is the lysosome. The protein localises to the membrane. It is found in the cytoplasmic vesicle. It localises to the secretory vesicle. The protein resides in the synaptic vesicle membrane. The enzyme catalyses S-ubiquitinyl-[E2 ubiquitin-conjugating enzyme]-L-cysteine + [acceptor protein]-L-lysine = [E2 ubiquitin-conjugating enzyme]-L-cysteine + N(6)-ubiquitinyl-[acceptor protein]-L-lysine.. Its pathway is protein modification; protein ubiquitination. Functionally, E3 ubiquitin-protein ligase that plays a role in different processes including cell differentiation, receptor recycling or regulation of inflammation. Mediates the ubiquitination of AKT1 and GLUL, thereby playing a role in neuron cells differentiation. Plays a role in the establishment and maintenance of neuronal transmission and plasticity. Regulates Schwann cells differentiation by mediating ubiquitination of GLUL. Promotes neurodegeneration by mediating 'Lys-48'-linked polyubiquitination and subsequent degradation of AKT1 in axons: degradation of AKT1 prevents AKT1-mediated phosphorylation of GSK3B, leading to GSK3B activation and phosphorylation of DPYSL2/CRMP2 followed by destabilization of microtubule assembly in axons. Ubiquitinates the Na(+)/K(+) ATPase alpha-1 subunit/ATP1A1 and thereby influences its endocytosis and/or degradation. Controls ligand-induced EGFR signaling via mediating receptor ubiquitination and recruitment of the ESCRT machinery. Acts as a negative feedback mechanism controlling TLR3 trafficking by mediating TLR3 'Lys-63'-linked polyubiquitination to reduce type I IFN production. Modulates inflammation by promoting caveolin-1/CAV1 ubiquitination and degradation to regulate TLR4-activated immune response. This Bos taurus (Bovine) protein is E3 ubiquitin-protein ligase ZNRF1 (ZNRF1).